Here is a 178-residue protein sequence, read N- to C-terminus: Fatty-acid and retinol-binding protein 1 (178 aa).

Residues 1–16 (MYHRLILLALVGTTMA) form the signal peptide. 2 coiled-coil regions span residues 67-89 (DAALEALKDKSDKLYKNAVELRN) and 130-153 (KQAARDIIAKYQALSEETKEELKV).

Belongs to the fatty-acid and retinol-binding protein (FARBP) family. Post-translationally, not glycosylated.

The protein localises to the secreted. Its function is as follows. Binds retinol and different fatty acids. This is Fatty-acid and retinol-binding protein 1 from Brugia pahangi (Filarial nematode worm).